Consider the following 212-residue polypeptide: Transmembrane protein 186 (212 aa).

The Mitochondrial matrix portion of the chain corresponds to 1–78; it reads MAAVLRAVAR…YLSRLKVAQT (78 aa). Residues 79–99 traverse the membrane as a helical segment; the sequence is ALTVAALPPGLYCYSQGLMPF. Residues 100 to 101 are Mitochondrial intermembrane-facing; that stretch reads SS. A helical transmembrane segment spans residues 102–122; that stretch reads LCLAGGVAGFALAMLCWMSHF. Residues 123–212 lie on the Mitochondrial matrix side of the membrane; sequence FRRLVGILYV…QVFGVLDALK (90 aa).

Belongs to the TMEM186 family. Part of the mitochondrial complex I assembly/MCIA complex that comprises at least the core subunits TMEM126B, NDUFAF1, ECSIT and ACAD9 and complement subunits such as COA1 and TMEM186. Interacts with MT-ND3.

It is found in the mitochondrion inner membrane. Functionally, as part of the MCIA complex, required for efficient assembly of the mitochondrial complex I. This is Transmembrane protein 186 from Bos taurus (Bovine).